The chain runs to 1077 residues: Teashirt homolog 1 (1077 aa).

Disordered regions lie at residues Met-1 to Pro-109, Ser-139 to Ser-195, and Gly-269 to Glu-298. Residues Ile-26 to Leu-36 show a composition bias toward acidic residues. 2 stretches are compositionally biased toward polar residues: residues Gln-57–Asp-71 and Ser-139–Glu-152. The segment covering Pro-164–Ser-195 has biased composition (low complexity). 2 consecutive C2H2-type zinc fingers follow at residues Phe-246–His-270 and Leu-307–His-331. A compositionally biased stretch (basic and acidic residues) spans Gly-269–Lys-284. A C2H2-type 3; atypical zinc finger spans residues Leu-416–His-440. Disordered stretches follow at residues Ser-467–Leu-549 and Thr-647–Lys-720. Composition is skewed to basic and acidic residues over residues Ser-496–Glu-528, Thr-647–Ser-665, and Lys-675–Leu-708. A Phosphoserine modification is found at Ser-765. The tract at residues Thr-848–Glu-873 is disordered. Residues Pro-853–Ser-862 are compositionally biased toward polar residues. Residues Arg-885–Gly-955 constitute a DNA-binding region (homeobox; atypical). 2 consecutive C2H2-type zinc fingers follow at residues Phe-970–His-992 and Phe-1037–His-1060.

The protein belongs to the teashirt C2H2-type zinc-finger protein family. Interacts (via homeobox domain) with APBB1 (via PID domain 1). Expressed in brain; strongly reduced in post-mortem elderly subjects with Alzheimer disease.

The protein localises to the nucleus. In terms of biological role, probable transcriptional regulator involved in developmental processes. May act as a transcriptional repressor (Potential). The sequence is that of Teashirt homolog 1 (TSHZ1) from Homo sapiens (Human).